The chain runs to 229 residues: Small ribosomal subunit protein uS3c (229 aa).

The KH type-2 domain maps to leucine 39–glutamine 128.

This sequence belongs to the universal ribosomal protein uS3 family. Part of the 30S ribosomal subunit.

The protein localises to the plastid. Its subcellular location is the chloroplast. The protein is Small ribosomal subunit protein uS3c (rps3) of Tupiella akineta (Green alga).